The sequence spans 638 residues: MESTIVMMMMITRSFFCFLGFLCLLCSSVHGLLSPKGVNFEVQALMDIKASLHDPHGVLDNWDRDAVDPCSWTMVTCSSENFVIGLGTPSQNLSGTLSPSITNLTNLRIVLLQNNNIKGKIPAEIGRLTRLETLDLSDNFFHGEIPFSVGYLQSLQYLRLNNNSLSGVFPLSLSNMTQLAFLDLSYNNLSGPVPRFAAKTFSIVGNPLICPTGTEPDCNGTTLIPMSMNLNQTGVPLYAGGSRNHKMAIAVGSSVGTVSLIFIAVGLFLWWRQRHNQNTFFDVKDGNHHEEVSLGNLRRFGFRELQIATNNFSSKNLLGKGGYGNVYKGILGDSTVVAVKRLKDGGALGGEIQFQTEVEMISLAVHRNLLRLYGFCITQTEKLLVYPYMSNGSVASRMKAKPVLDWSIRKRIAIGAARGLVYLHEQCDPKIIHRDVKAANILLDDYCEAVVGDFGLAKLLDHQDSHVTTAVRGTVGHIAPEYLSTGQSSEKTDVFGFGILLLELVTGQRAFEFGKAANQKGVMLDWVKKIHQEKKLELLVDKELLKKKSYDEIELDEMVRVALLCTQYLPGHRPKMSEVVRMLEGDGLAEKWEASQRSDSVSKCSNRINELMSSSDRYSDLTDDSSLLVQAMELSGPR.

Positions 1-31 (MESTIVMMMMITRSFFCFLGFLCLLCSSVHG) are cleaved as a signal peptide. Topologically, residues 32-248 (LLSPKGVNFE…AGGSRNHKMA (217 aa)) are extracellular. Residues Asn92 and Asn103 are each glycosylated (N-linked (GlcNAc...) asparagine). LRR repeat units lie at residues 104 to 128 (LTNLRIVLLQNNNIKGKIPAEIGRL), 130 to 152 (RLETLDLSDNFFHGEIPFSVGYL), 153 to 175 (QSLQYLRLNNNSLSGVFPLSLSN), and 177 to 200 (TQLAFLDLSYNNLSGPVPRFAAKT). Asn162, Asn175, Asn188, Asn219, and Asn231 each carry an N-linked (GlcNAc...) asparagine glycan. The helical transmembrane segment at 249–269 (IAVGSSVGTVSLIFIAVGLFL) threads the bilayer. Topologically, residues 270–638 (WWRQRHNQNT…VQAMELSGPR (369 aa)) are cytoplasmic. Thr309 carries the phosphothreonine modification. The region spanning 312-593 (FSSKNLLGKG…EGDGLAEKWE (282 aa)) is the Protein kinase domain. 318-326 (LGKGGYGNV) is a binding site for ATP. The residue at position 335 (Thr335) is a Phosphothreonine. Lys340 is a binding site for ATP. Phosphoserine occurs at positions 393 and 396. Positions 422-502 (YLHEQCDPKI…DVFGFGILLL (81 aa)) are interaction with geminivirus NSP protein. The Proton acceptor role is filled by Asp435. A phosphothreonine mark is found at Thr468, Thr469, and Thr474. Phosphotyrosine is present on Tyr482. Ser484 carries the phosphoserine modification. Thr485 carries the phosphothreonine modification. At Ser489 the chain carries Phosphoserine. At Thr566 the chain carries Phosphothreonine.

The protein belongs to the protein kinase superfamily. Ser/Thr protein kinase family. Oligomer. Interacts with geminivirus nuclear shuttle protein (NSP). Interacts with RPL10A and RPL18B. Post-translationally, autophosphorylated. Expressed in seedlings, leaves, roots, stems and flowers.

It localises to the cell membrane. It carries out the reaction L-seryl-[protein] + ATP = O-phospho-L-seryl-[protein] + ADP + H(+). It catalyses the reaction L-threonyl-[protein] + ATP = O-phospho-L-threonyl-[protein] + ADP + H(+). Its activity is regulated as follows. Inhibited by the viral nuclear shuttle protein (NSP) that binds to the region required for oligomerization. Its function is as follows. Involved in defense response to geminivirus and begomovirus infection via regulation of the nuclear trafficking of RPL10A. Phosphorylates RPL10A in vitro. Activation of NIK1 down-regulates cytosolic translation. This is Protein NSP-INTERACTING KINASE 1 from Arabidopsis thaliana (Mouse-ear cress).